The primary structure comprises 398 residues: Phosphoglycerate kinase (398 aa).

Residues 21-23 (DFN), Arg-36, 59-62 (HLGR), Arg-119, and Arg-157 contribute to the substrate site. ATP contacts are provided by residues Lys-208, Gly-296, Glu-327, and 354–357 (GGDS).

It belongs to the phosphoglycerate kinase family. In terms of assembly, monomer.

Its subcellular location is the cytoplasm. It carries out the reaction (2R)-3-phosphoglycerate + ATP = (2R)-3-phospho-glyceroyl phosphate + ADP. It functions in the pathway carbohydrate degradation; glycolysis; pyruvate from D-glyceraldehyde 3-phosphate: step 2/5. In Streptococcus equi subsp. zooepidemicus (strain MGCS10565), this protein is Phosphoglycerate kinase.